A 91-amino-acid chain; its full sequence is Potassium channel toxin BmTXK-beta-2 (91 aa).

The N-terminal stretch at 1 to 19 (MQRNLVVLLFLGMVALSSC) is a signal peptide. The propeptide occupies 20–27 (GLREKHFQ). The BetaSPN-type CS-alpha/beta domain occupies 54 to 91 (QFGCPAYQGYCDDHCQDIKKEEGFCHGFKCKCGIPMGF). 3 disulfide bridges follow: Cys57–Cys78, Cys64–Cys83, and Cys68–Cys85.

Belongs to the long chain scorpion toxin family. Class 1 subfamily. In terms of tissue distribution, expressed by the venom gland.

Its subcellular location is the secreted. Inhibits voltage-gated potassium channel. This chain is Potassium channel toxin BmTXK-beta-2, found in Olivierus martensii (Manchurian scorpion).